We begin with the raw amino-acid sequence, 368 residues long: (Iso)eugenol O-methyltransferase (368 aa).

Residues 1-2 (MG) constitute a propeptide that is removed on maturation. S-adenosyl-L-methionine-binding positions include S187, 211–212 (GG), D234, 254–255 (DM), and K268. Residue H272 is the Proton acceptor of the active site.

The protein belongs to the class I-like SAM-binding methyltransferase superfamily. Cation-independent O-methyltransferase family. COMT subfamily. As to quaternary structure, homodimer. Expressed in petals, style and stamens, but not in stigma, sepals, leaves or stem tissues.

It carries out the reaction (E)-isoeugenol + S-adenosyl-L-methionine = (E)-isomethyleugenol + S-adenosyl-L-homocysteine + H(+). Catalyzes the methylation of the para-4-hydroxyl of both eugenol and (iso)eugenol to methyleugenol and isomethyleugenol, respectively. The resulting products are part of a complex mixture of low-molecular-weight volatile compounds emitted by the flowers to attract pollinators. The protein is (Iso)eugenol O-methyltransferase (IEMT1) of Clarkia breweri (Fairy fans).